We begin with the raw amino-acid sequence, 79 residues long: Small ribosomal subunit protein bS16 (79 aa).

It belongs to the bacterial ribosomal protein bS16 family.

In Marinobacter nauticus (strain ATCC 700491 / DSM 11845 / VT8) (Marinobacter aquaeolei), this protein is Small ribosomal subunit protein bS16.